A 312-amino-acid polypeptide reads, in one-letter code: Transcriptional regulator protein Pur-beta (312 aa).

Residues 1–32 form a disordered region; sequence MADGDSGSERGGGGGPCGFQPASRGGGEQETQ. A2 is subject to N-acetylalanine. Phosphoserine is present on residues S6 and S8. Residue R24 is modified to Omega-N-methylarginine. Residues 28–254 form a DNA-binding region; that stretch reads EQETQELASK…LRVSEVKPSY (227 aa). T31 bears the Phosphothreonine mark. S101 carries the phosphoserine modification. R152 is modified (omega-N-methylarginine). K267 bears the N6-acetyllysine mark. The span at 284-295 shows a compositional bias: basic and acidic residues; it reads ERQRDKLYERRG. Positions 284 to 312 are disordered; that stretch reads ERQRDKLYERRGGGSGGGEESEGEEVDED. R294 carries the omega-N-methylarginine modification. Phosphoserine is present on residues S298 and S304. The segment covering 302–312 has biased composition (acidic residues); sequence EESEGEEVDED.

Belongs to the PUR DNA-binding protein family. Homodimer, heterodimer with PURA and heterotrimer with PURA and YBX1/Y-box protein 1. Interacts with MYOCD and SRF. Expressed in myocardium of heart failure patients.

It is found in the nucleus. Transcriptional regulator which can act as an activator or a repressor. Represses the transcription of ACTA2 in fibroblasts and smooth muscle cells via its ability to interact with the purine-rich strand of a MCAT- containing element in the 5' flanking region of the gene. Represses the transcription of MYOCD, capable of repressing all isoforms of MYOCD but the magnitude of the repressive effects is most notable for the SMC- specific isoforms. Promotes hepatic glucose production by activating the transcription of ADCY6, leading to cAMP accumulation, increased PKA activity, CREB activation, and increased transcription of PCK1 and G6PC genes. Has capacity to bind repeated elements in single-stranded DNA such as the purine-rich single strand of the PUR element located upstream of the MYC gene. Participates in transcriptional and translational regulation of alpha-MHC expression in cardiac myocytes by binding to the purine-rich negative regulatory (PNR) element Modulates constitutive liver galectin-3 gene transcription by binding to its promoter. May play a role in the dendritic transport of a subset of mRNAs. The chain is Transcriptional regulator protein Pur-beta (PURB) from Homo sapiens (Human).